Consider the following 1517-residue polypeptide: DNA-directed RNA polymerase subunit beta' (1517 aa).

Positions 71, 73, 86, and 89 each coordinate Zn(2+). Mg(2+)-binding residues include Asp482, Asp484, and Asp486. Zn(2+) contacts are provided by Cys812, Cys886, Cys893, and Cys896.

This sequence belongs to the RNA polymerase beta' chain family. As to quaternary structure, the RNAP catalytic core consists of 2 alpha, 1 beta, 1 beta' and 1 omega subunit. When a sigma factor is associated with the core the holoenzyme is formed, which can initiate transcription. It depends on Mg(2+) as a cofactor. Zn(2+) serves as cofactor.

The enzyme catalyses RNA(n) + a ribonucleoside 5'-triphosphate = RNA(n+1) + diphosphate. Functionally, DNA-dependent RNA polymerase catalyzes the transcription of DNA into RNA using the four ribonucleoside triphosphates as substrates. The protein is DNA-directed RNA polymerase subunit beta' of Campylobacter jejuni subsp. jejuni serotype O:23/36 (strain 81-176).